A 101-amino-acid chain; its full sequence is Putative pterin-4-alpha-carbinolamine dehydratase (101 aa).

The protein belongs to the pterin-4-alpha-carbinolamine dehydratase family.

It catalyses the reaction (4aS,6R)-4a-hydroxy-L-erythro-5,6,7,8-tetrahydrobiopterin = (6R)-L-erythro-6,7-dihydrobiopterin + H2O. The polypeptide is Putative pterin-4-alpha-carbinolamine dehydratase (dcoH) (Streptomyces avermitilis (strain ATCC 31267 / DSM 46492 / JCM 5070 / NBRC 14893 / NCIMB 12804 / NRRL 8165 / MA-4680)).